The primary structure comprises 364 residues: Endoglucanase A (364 aa).

E169 functions as the Proton donor in the catalytic mechanism. Catalysis depends on E293, which acts as the Nucleophile.

The protein belongs to the glycosyl hydrolase 5 (cellulase A) family.

The protein localises to the cytoplasm. It carries out the reaction Endohydrolysis of (1-&gt;4)-beta-D-glucosidic linkages in cellulose, lichenin and cereal beta-D-glucans.. The enzyme catalyses Endohydrolysis of (1-&gt;4)-beta-D-xylosidic linkages in xylans.. Its function is as follows. Hydrolyzes both carboxymethylcellulose and xylan. Probably has a role in hydrolyzing oligosaccharides derived from cellulose, which are transported across the cell wall. The polypeptide is Endoglucanase A (celA) (Ruminococcus albus).